Consider the following 332-residue polypeptide: Fructose-1,6-bisphosphatase class 1 (332 aa).

The Mg(2+) site is built by E89, D110, L112, and D113. Residues 113 to 116 (DGSS), N206, Y239, 257 to 259 (YLY), and K269 contribute to the substrate site. E275 lines the Mg(2+) pocket.

This sequence belongs to the FBPase class 1 family. As to quaternary structure, homotetramer. Requires Mg(2+) as cofactor.

It localises to the cytoplasm. It catalyses the reaction beta-D-fructose 1,6-bisphosphate + H2O = beta-D-fructose 6-phosphate + phosphate. It participates in carbohydrate biosynthesis; gluconeogenesis. The polypeptide is Fructose-1,6-bisphosphatase class 1 (Salmonella arizonae (strain ATCC BAA-731 / CDC346-86 / RSK2980)).